The sequence spans 213 residues: Redox-sensing transcriptional repressor Rex (213 aa).

The H-T-H motif DNA-binding region spans 16–55 (IYYRYLRLLSNSGKNRVSSTELAEAVKVDSATIRRDFSYF). Residue 90–95 (GVGNLG) participates in NAD(+) binding.

This sequence belongs to the transcriptional regulatory Rex family. Homodimer.

The protein localises to the cytoplasm. Its function is as follows. Modulates transcription in response to changes in cellular NADH/NAD(+) redox state. The chain is Redox-sensing transcriptional repressor Rex from Ligilactobacillus salivarius (strain UCC118) (Lactobacillus salivarius).